The sequence spans 341 residues: Glycerol-3-phosphate dehydrogenase [NAD(P)+] (341 aa).

Residues Ser-14, Phe-15, Arg-35, and Lys-108 each contribute to the NADPH site. 2 residues coordinate sn-glycerol 3-phosphate: Lys-108 and Gly-136. Ala-140 is a binding site for NADPH. The sn-glycerol 3-phosphate site is built by Lys-191, Asp-244, Ser-254, Arg-255, and Asn-256. The active-site Proton acceptor is the Lys-191. Arg-255 contacts NADPH. NADPH-binding residues include Val-279 and Glu-281.

This sequence belongs to the NAD-dependent glycerol-3-phosphate dehydrogenase family.

The protein localises to the cytoplasm. The enzyme catalyses sn-glycerol 3-phosphate + NAD(+) = dihydroxyacetone phosphate + NADH + H(+). It carries out the reaction sn-glycerol 3-phosphate + NADP(+) = dihydroxyacetone phosphate + NADPH + H(+). It participates in membrane lipid metabolism; glycerophospholipid metabolism. Catalyzes the reduction of the glycolytic intermediate dihydroxyacetone phosphate (DHAP) to sn-glycerol 3-phosphate (G3P), the key precursor for phospholipid synthesis. This is Glycerol-3-phosphate dehydrogenase [NAD(P)+] from Pseudomonas fluorescens (strain ATCC BAA-477 / NRRL B-23932 / Pf-5).